A 231-amino-acid chain; its full sequence is Transmembrane gamma-carboxyglutamic acid protein 3 (231 aa).

The propeptide occupies 1–19 (MAVFLEAKNAHAVLKRFPR). Residues 20–65 (ANEFLEELRQGTIERECMEEICSYEEVKEVFENKEKTMEFWKGYPN) enclose the Gla domain. Topologically, residues 20 to 78 (ANEFLEELRQGTIERECMEEICSYEEVKEVFENKEKTMEFWKGYPNAVYSVRDPSQSSD) are extracellular. Glu22, Glu25, Glu26, Glu33, Glu35, Glu38, Glu39, Glu44, Glu45, Glu48, Glu51, Glu54, and Glu58 each carry 4-carboxyglutamate. An intrachain disulfide couples Cys36 to Cys41. Residues 79 to 101 (AMYVVVPLLGVVLLIVIALFIIW) traverse the membrane as a helical segment. Topologically, residues 102 to 231 (RCQLQKATRH…IVAASPSADK (130 aa)) are cytoplasmic. 2 disordered regions span residues 140 to 165 (HSQGESSGHREAGNNPQIVMGPSRGG) and 184 to 231 (RLSS…SADK). Positions 201 to 212 (QEGSSEEASVSY) are enriched in polar residues.

Gla residues are produced after subsequent post-translational modifications of glutamate by a vitamin K-dependent gamma-carboxylase.

It is found in the membrane. This is Transmembrane gamma-carboxyglutamic acid protein 3 (Prrg3) from Mus musculus (Mouse).